The primary structure comprises 139 residues: MRPSRYAPLLCAMVLALAWLSAVAGCSRGGSSKAGRSSSVAGTLPAGVVGVSPAGVTTRVDAPAESTEEEYYQACHAARLWMDAQPGSGESLIEPYLAVVQASPSGVAGSWHIRWAALTPARQAAVIVAARAAANAECG.

Residues 1–25 form the signal peptide; it reads MRPSRYAPLLCAMVLALAWLSAVAG. A lipid anchor (N-palmitoyl cysteine) is attached at cysteine 26. Cysteine 26 is lipidated: S-diacylglycerol cysteine.

The protein localises to the cell membrane. This is Putative lipoprotein LpqV (lpqV) from Mycobacterium bovis (strain ATCC BAA-935 / AF2122/97).